The following is a 400-amino-acid chain: Deoxyguanosinetriphosphate triphosphohydrolase-like protein (400 aa).

An HD domain is found at 73–215 (RLTHSIEVSQ…AAIADDIAYN (143 aa)).

This sequence belongs to the dGTPase family. Type 2 subfamily.

The chain is Deoxyguanosinetriphosphate triphosphohydrolase-like protein from Bartonella henselae (strain ATCC 49882 / DSM 28221 / CCUG 30454 / Houston 1) (Rochalimaea henselae).